The sequence spans 508 residues: Ribose import ATP-binding protein RbsA 2 (508 aa).

ABC transporter domains lie at 6–241 (LTIH…VGRE) and 254–499 (ERSG…SGMG). Residue 38 to 45 (GENGAGKS) participates in ATP binding.

The protein belongs to the ABC transporter superfamily. Ribose importer (TC 3.A.1.2.1) family. As to quaternary structure, the complex is composed of an ATP-binding protein (RbsA), two transmembrane proteins (RbsC) and a solute-binding protein (RbsB).

The protein localises to the cell inner membrane. It carries out the reaction D-ribose(out) + ATP + H2O = D-ribose(in) + ADP + phosphate + H(+). Functionally, part of the ABC transporter complex RbsABC involved in ribose import. Responsible for energy coupling to the transport system. The chain is Ribose import ATP-binding protein RbsA 2 from Rhizobium etli (strain ATCC 51251 / DSM 11541 / JCM 21823 / NBRC 15573 / CFN 42).